Consider the following 513-residue polypeptide: 2-isopropylmalate synthase (513 aa).

Residues 4–266 (IEFFDTSLRD…KSPLVLAETM (263 aa)) enclose the Pyruvate carboxyltransferase domain. Mn(2+) contacts are provided by Asp-13, His-201, His-203, and Asn-237. Residues 390 to 513 (ILNNVQIDGH…VEQISAHDGI (124 aa)) form a regulatory domain region.

Belongs to the alpha-IPM synthase/homocitrate synthase family. LeuA type 1 subfamily. Homodimer. Mn(2+) is required as a cofactor.

Its subcellular location is the cytoplasm. It carries out the reaction 3-methyl-2-oxobutanoate + acetyl-CoA + H2O = (2S)-2-isopropylmalate + CoA + H(+). Its pathway is amino-acid biosynthesis; L-leucine biosynthesis; L-leucine from 3-methyl-2-oxobutanoate: step 1/4. Catalyzes the condensation of the acetyl group of acetyl-CoA with 3-methyl-2-oxobutanoate (2-ketoisovalerate) to form 3-carboxy-3-hydroxy-4-methylpentanoate (2-isopropylmalate). This is 2-isopropylmalate synthase from Lactococcus lactis subsp. cremoris (strain SK11).